A 297-amino-acid chain; its full sequence is UDP-N-acetylenolpyruvoylglucosamine reductase (297 aa).

Residues 26–191 (QTGGPAEYLA…IAATFALKAG (166 aa)) enclose the FAD-binding PCMH-type domain. Residue Arg-170 is part of the active site. Ser-220 acts as the Proton donor in catalysis. Glu-290 is an active-site residue.

It belongs to the MurB family. FAD is required as a cofactor.

It localises to the cytoplasm. The catalysed reaction is UDP-N-acetyl-alpha-D-muramate + NADP(+) = UDP-N-acetyl-3-O-(1-carboxyvinyl)-alpha-D-glucosamine + NADPH + H(+). The protein operates within cell wall biogenesis; peptidoglycan biosynthesis. Cell wall formation. In Lactobacillus delbrueckii subsp. bulgaricus (strain ATCC 11842 / DSM 20081 / BCRC 10696 / JCM 1002 / NBRC 13953 / NCIMB 11778 / NCTC 12712 / WDCM 00102 / Lb 14), this protein is UDP-N-acetylenolpyruvoylglucosamine reductase.